The primary structure comprises 475 residues: Aspartyl/glutamyl-tRNA(Asn/Gln) amidotransferase subunit B (475 aa).

The protein belongs to the GatB/GatE family. GatB subfamily. In terms of assembly, heterotrimer of A, B and C subunits.

It catalyses the reaction L-glutamyl-tRNA(Gln) + L-glutamine + ATP + H2O = L-glutaminyl-tRNA(Gln) + L-glutamate + ADP + phosphate + H(+). The enzyme catalyses L-aspartyl-tRNA(Asn) + L-glutamine + ATP + H2O = L-asparaginyl-tRNA(Asn) + L-glutamate + ADP + phosphate + 2 H(+). In terms of biological role, allows the formation of correctly charged Asn-tRNA(Asn) or Gln-tRNA(Gln) through the transamidation of misacylated Asp-tRNA(Asn) or Glu-tRNA(Gln) in organisms which lack either or both of asparaginyl-tRNA or glutaminyl-tRNA synthetases. The reaction takes place in the presence of glutamine and ATP through an activated phospho-Asp-tRNA(Asn) or phospho-Glu-tRNA(Gln). This is Aspartyl/glutamyl-tRNA(Asn/Gln) amidotransferase subunit B from Macrococcus caseolyticus (strain JCSC5402) (Macrococcoides caseolyticum).